A 325-amino-acid polypeptide reads, in one-letter code: Elongation factor P--(R)-beta-lysine ligase (325 aa).

Residue 76–78 (SPE) participates in substrate binding. Residues 100-102 (RNE) and N109 each bind ATP. Position 118 (Y118) interacts with substrate. Position 244-245 (244-245 (EL)) interacts with ATP. Position 251 (E251) interacts with substrate. Position 300 (G300) interacts with ATP.

The protein belongs to the class-II aminoacyl-tRNA synthetase family. EpmA subfamily. In terms of assembly, homodimer.

It carries out the reaction D-beta-lysine + L-lysyl-[protein] + ATP = N(6)-((3R)-3,6-diaminohexanoyl)-L-lysyl-[protein] + AMP + diphosphate + H(+). Its function is as follows. With EpmB is involved in the beta-lysylation step of the post-translational modification of translation elongation factor P (EF-P). Catalyzes the ATP-dependent activation of (R)-beta-lysine produced by EpmB, forming a lysyl-adenylate, from which the beta-lysyl moiety is then transferred to the epsilon-amino group of a conserved specific lysine residue in EF-P. This is Elongation factor P--(R)-beta-lysine ligase from Enterobacter sp. (strain 638).